The following is a 417-amino-acid chain: Gamma-glutamyl phosphate reductase (417 aa).

The protein belongs to the gamma-glutamyl phosphate reductase family.

The protein resides in the cytoplasm. The enzyme catalyses L-glutamate 5-semialdehyde + phosphate + NADP(+) = L-glutamyl 5-phosphate + NADPH + H(+). The protein operates within amino-acid biosynthesis; L-proline biosynthesis; L-glutamate 5-semialdehyde from L-glutamate: step 2/2. In terms of biological role, catalyzes the NADPH-dependent reduction of L-glutamate 5-phosphate into L-glutamate 5-semialdehyde and phosphate. The product spontaneously undergoes cyclization to form 1-pyrroline-5-carboxylate. This Clostridium novyi (strain NT) protein is Gamma-glutamyl phosphate reductase.